The primary structure comprises 159 residues: 2-amino-4-hydroxy-6-hydroxymethyldihydropteridine pyrophosphokinase (159 aa).

It belongs to the HPPK family. Monomer.

It carries out the reaction 6-hydroxymethyl-7,8-dihydropterin + ATP = (7,8-dihydropterin-6-yl)methyl diphosphate + AMP + H(+). The protein operates within cofactor biosynthesis; tetrahydrofolate biosynthesis; 2-amino-4-hydroxy-6-hydroxymethyl-7,8-dihydropteridine diphosphate from 7,8-dihydroneopterin triphosphate: step 4/4. In terms of biological role, catalyzes the transfer of pyrophosphate from adenosine triphosphate (ATP) to 6-hydroxymethyl-7,8-dihydropterin, an enzymatic step in folate biosynthesis pathway. The sequence is that of 2-amino-4-hydroxy-6-hydroxymethyldihydropteridine pyrophosphokinase (folK) from Escherichia coli (strain K12).